Here is a 339-residue protein sequence, read N- to C-terminus: Putative methylthioribose-1-phosphate isomerase (339 aa).

Substrate-binding positions include 43–45, Arg86, and Gln191; that span reads RGA. The Proton donor role is filled by Asp232. A substrate-binding site is contributed by 241–242; the sequence is NK.

The protein belongs to the eIF-2B alpha/beta/delta subunits family. MtnA subfamily.

The catalysed reaction is 5-(methylsulfanyl)-alpha-D-ribose 1-phosphate = 5-(methylsulfanyl)-D-ribulose 1-phosphate. Functionally, catalyzes the interconversion of methylthioribose-1-phosphate (MTR-1-P) into methylthioribulose-1-phosphate (MTRu-1-P). This is Putative methylthioribose-1-phosphate isomerase from Archaeoglobus fulgidus (strain ATCC 49558 / DSM 4304 / JCM 9628 / NBRC 100126 / VC-16).